Consider the following 551-residue polypeptide: RCC1 and BTB domain-containing protein 2 (551 aa).

6 RCC1 repeats span residues 64–115 (NDEI…VLAT), 117–169 (DGEV…VLTS), 171–222 (GEVF…AVVD), 223–274 (TGEV…VLTD), 276–326 (GQIY…AAKT), and 328–382 (GGHV…TVAE). One can recognise a BTB domain in the interval 394–457 (ADLKFLVDGK…LYTDNISLSP (64 aa)).

Expressed in testis and heart (at protein level).

It is found in the cytoplasmic vesicle. The protein resides in the secretory vesicle. The protein localises to the acrosome. The protein is RCC1 and BTB domain-containing protein 2 (Rcbtb2) of Mus musculus (Mouse).